The primary structure comprises 609 residues: Glutamine--fructose-6-phosphate aminotransferase [isomerizing] (609 aa).

The active-site Nucleophile; for GATase activity is C2. One can recognise a Glutamine amidotransferase type-2 domain in the interval 2–218 (CGIVGAVAQR…EGDVVEVTRR (217 aa)). 2 SIS domains span residues 286–426 (ADAL…LKGA) and 458–599 (LAEG…VDQP). K604 functions as the For Fru-6P isomerization activity in the catalytic mechanism.

Homodimer.

It localises to the cytoplasm. The enzyme catalyses D-fructose 6-phosphate + L-glutamine = D-glucosamine 6-phosphate + L-glutamate. Catalyzes the first step in hexosamine metabolism, converting fructose-6P into glucosamine-6P using glutamine as a nitrogen source. This chain is Glutamine--fructose-6-phosphate aminotransferase [isomerizing], found in Yersinia pestis.